The following is a 375-amino-acid chain: Putative nuclease YhcG (375 aa).

As to quaternary structure, interacts with DNA processing enzymes, including the restriction complex HsdMRS, the integrases IntF and IntS, and the recombinase PinE.

Functionally, may be a nuclease involved in DNA recombination and repair. In Escherichia coli (strain K12), this protein is Putative nuclease YhcG (yhcG).